We begin with the raw amino-acid sequence, 104 residues long: ATP-dependent Clp protease adapter protein ClpS (104 aa).

The protein belongs to the ClpS family. As to quaternary structure, binds to the N-terminal domain of the chaperone ClpA.

Involved in the modulation of the specificity of the ClpAP-mediated ATP-dependent protein degradation. The polypeptide is ATP-dependent Clp protease adapter protein ClpS (Burkholderia thailandensis (strain ATCC 700388 / DSM 13276 / CCUG 48851 / CIP 106301 / E264)).